Consider the following 253-residue polypeptide: MKVIITVNYEEMSKKAAEIVKKQIKEKPNTVLGLATGSTPLGMYKHLIEMYKRGEIDFSNVITFNLDEYIGLSPDHPQSYHYFMFHNFFNHINIKKENVHIPNGIAEDLEEECRKYEEEIEKAGGIDLQILGIGINGHIGFNEPDESIETKTHVVTLTEKTINANKRFFKSAEEVPRKAITMGLGSIMKAKKIVLLASGKNKAEAIKETIKGQLTTKVPATVLALHHDVTIIIDKEAASLIPDEDLKEIEVIV.

Asp67 functions as the Proton acceptor; for enolization step in the catalytic mechanism. The active-site For ring-opening step is Asn136. The active-site Proton acceptor; for ring-opening step is His138. Glu143 acts as the For ring-opening step in catalysis.

The protein belongs to the glucosamine/galactosamine-6-phosphate isomerase family. NagB subfamily.

It carries out the reaction alpha-D-glucosamine 6-phosphate + H2O = beta-D-fructose 6-phosphate + NH4(+). It functions in the pathway amino-sugar metabolism; N-acetylneuraminate degradation; D-fructose 6-phosphate from N-acetylneuraminate: step 5/5. Catalyzes the reversible isomerization-deamination of glucosamine 6-phosphate (GlcN6P) to form fructose 6-phosphate (Fru6P) and ammonium ion. This is Glucosamine-6-phosphate deaminase from Thermoanaerobacter sp. (strain X514).